We begin with the raw amino-acid sequence, 140 residues long: Vacuolar protein sorting-associated protein 55 homolog (140 aa).

Over 1 to 16 the chain is Cytoplasmic; the sequence is MADVPGYLRTCLDMGK. The chain crosses the membrane as a helical span at residues 17–37; the sequence is IAFLAILVSTGIVLQILACAL. Over 38–40 the chain is Lumenal; the sequence is FNN. A helical transmembrane segment spans residues 41–61; the sequence is WWPMLSVIMYVLLPMPLLFFG. Topologically, residues 62 to 75 are cytoplasmic; that stretch reads GSDSTSLFNESDNS. A helical transmembrane segment spans residues 76–98; that stretch reads WINAAKFLTGASAVGSVAIPSIL. Residues 99–108 lie on the Lumenal side of the membrane; it reads KHAGLIGWGA. The chain crosses the membrane as a helical span at residues 109 to 129; it reads LALDLSSYVVFLVAILGYICI. Residues 130-140 are Cytoplasmic-facing; the sequence is GDASDNYYSYI.

The protein belongs to the OB-RGRP/VPS55 family.

It localises to the endosome membrane. Its function is as follows. Involved in endosomal protein transport. This is Vacuolar protein sorting-associated protein 55 homolog from Arabidopsis thaliana (Mouse-ear cress).